Consider the following 67-residue polypeptide: Bowman-Birk type proteinase inhibitor A4 (67 aa).

4 cysteine pairs are disulfide-bonded: C10–C29, C16–C27, C36–C43, and C40–C57.

The protein belongs to the Bowman-Birk serine protease inhibitor family. As to expression, expressed in bulb (at protein level).

Its function is as follows. Serine protease inhibitor. Inhibits trypsin (Ki=12nM) and weakly inhibits chymotrypsin with (Ki=460nm). Does not inhibit bacterial subtilisin. The sequence is that of Bowman-Birk type proteinase inhibitor A4 from Hyacinthus orientalis (Common hyacinth).